The following is a 291-amino-acid chain: 4-hydroxy-tetrahydrodipicolinate synthase (291 aa).

Pyruvate is bound at residue T45. Y131 functions as the Proton donor/acceptor in the catalytic mechanism. Catalysis depends on K159, which acts as the Schiff-base intermediate with substrate. I202 provides a ligand contact to pyruvate.

The protein belongs to the DapA family. In terms of assembly, homotetramer; dimer of dimers.

It localises to the cytoplasm. It catalyses the reaction L-aspartate 4-semialdehyde + pyruvate = (2S,4S)-4-hydroxy-2,3,4,5-tetrahydrodipicolinate + H2O + H(+). It functions in the pathway amino-acid biosynthesis; L-lysine biosynthesis via DAP pathway; (S)-tetrahydrodipicolinate from L-aspartate: step 3/4. Its function is as follows. Catalyzes the condensation of (S)-aspartate-beta-semialdehyde [(S)-ASA] and pyruvate to 4-hydroxy-tetrahydrodipicolinate (HTPA). In Methanococcoides burtonii (strain DSM 6242 / NBRC 107633 / OCM 468 / ACE-M), this protein is 4-hydroxy-tetrahydrodipicolinate synthase.